The sequence spans 169 residues: Ribosome maturation factor RimM (169 aa).

Residues Asp96 to Tyr169 enclose the PRC barrel domain.

It belongs to the RimM family. In terms of assembly, binds ribosomal protein uS19.

It is found in the cytoplasm. Functionally, an accessory protein needed during the final step in the assembly of 30S ribosomal subunit, possibly for assembly of the head region. Essential for efficient processing of 16S rRNA. May be needed both before and after RbfA during the maturation of 16S rRNA. It has affinity for free ribosomal 30S subunits but not for 70S ribosomes. The polypeptide is Ribosome maturation factor RimM (Chromobacterium violaceum (strain ATCC 12472 / DSM 30191 / JCM 1249 / CCUG 213 / NBRC 12614 / NCIMB 9131 / NCTC 9757 / MK)).